Here is a 1284-residue protein sequence, read N- to C-terminus: ABC multidrug transporter atrC (1284 aa).

Positions 1–11 (MKSTAESKETP) are enriched in basic and acidic residues. The disordered stretch occupies residues 1–24 (MKSTAESKETPSQDESTTSVPCTE). 6 helical membrane-spanning segments follow: residues 55-75 (AVAILAACASGAGIALQNLIF), 99-119 (AAELALYFVYLGIARLVLSYT), 178-198 (IGLLFQGLAAFVTLSLSRLWC), 203-223 (TLICICIPVATIGTTGVVAAV), 282-302 (LLGLLFSAEYTIIYLGYGLAF), and 320-340 (IFTVLLSVVIASINLTLLAPY). One can recognise an ABC transmembrane type-1 1 domain in the interval 55–346 (AVAILAACAS…LAPYSIEFSR (292 aa)). Residues 381 to 626 (VELENVTFSY…DGVYAGLVKI (246 aa)) enclose the ABC transporter 1 domain. Asparagine 385 and asparagine 401 each carry an N-linked (GlcNAc...) asparagine glycan. 416–423 (GQSGSGKS) provides a ligand contact to ATP. N-linked (GlcNAc...) asparagine glycosylation is found at asparagine 488 and asparagine 632. The next 2 helical transmembrane spans lie at 705-725 (LVVLLGCLGGCAMYPGQAILM) and 745-765 (FYASMLIVLAAGCLICYLAVG). Residues 705-992 (LVVLLGCLGG…LFQWSTSITK (288 aa)) form the ABC transmembrane type-1 2 domain. The N-linked (GlcNAc...) asparagine glycan is linked to asparagine 800. 4 helical membrane passes run 824–844 (IALVVIAVLQVVTCGILAIAF), 846–866 (WKLGLVVVFGGIPPLVGAGMV), 931–951 (MICFGLTQCIEYWFQALGFWY), and 955–975 (LVSLGETSMYSFFVAFLSVFF). N-linked (GlcNAc...) asparagine glycosylation occurs at asparagine 995. One can recognise an ABC transporter 2 domain in the interval 1027–1280 (IAMDNVRFSY…GGLYRRMCEA (254 aa)). 1062–1069 (GSSGCGKS) provides a ligand contact to ATP. Asparagine 1122 carries N-linked (GlcNAc...) asparagine glycosylation.

Belongs to the ABC transporter superfamily. ABCB family. Multidrug resistance exporter (TC 3.A.1.201) subfamily.

It localises to the cell membrane. Functionally, pleiotropic ABC efflux transporter involved in the protection of the cells against a wide range of toxic compounds. This is ABC multidrug transporter atrC from Emericella nidulans (Aspergillus nidulans).